The primary structure comprises 90 residues: Small ribosomal subunit protein bS16 (90 aa).

It belongs to the bacterial ribosomal protein bS16 family.

The polypeptide is Small ribosomal subunit protein bS16 (Streptococcus gordonii (strain Challis / ATCC 35105 / BCRC 15272 / CH1 / DL1 / V288)).